Here is a 672-residue protein sequence, read N- to C-terminus: Spermatid perinuclear RNA-binding protein (672 aa).

In terms of domain architecture, DZF spans 5–362; the sequence is RSFANDDRHV…ALKRPFEDGV (358 aa). A disordered region spans residues 348-370; the sequence is GTGSSALKRPFEDGVGDDKDPNK. Positions 356–370 are enriched in basic and acidic residues; sequence RPFEDGVGDDKDPNK. Positions 386–452 constitute a DRBM 1 domain; that stretch reads DLMNALMRLN…AVKVLQAMGY (67 aa). The disordered stretch occupies residues 463–494; the sequence is VSSDEKSDNEGKNETVSSISSNNTGNSTADTS. Positions 465–475 are enriched in basic and acidic residues; that stretch reads SDEKSDNEGKN. Residues 477-490 show a composition bias toward low complexity; the sequence is TVSSISSNNTGNST. Residues 509–575 enclose the DRBM 2 domain; that stretch reads SGKNPVMELN…ALAALEKLFS (67 aa).

It localises to the cytoplasm. Its function is as follows. May be involved in normal spermatogenesis and sperm function. Binds to double-stranded DNA and RNA. In Gallus gallus (Chicken), this protein is Spermatid perinuclear RNA-binding protein (STRBP).